Reading from the N-terminus, the 223-residue chain is Phosphoenolpyruvate guanylyltransferase (223 aa).

3 residues coordinate phosphoenolpyruvate: threonine 140, glycine 156, and serine 159.

This sequence belongs to the CofC family.

The catalysed reaction is phosphoenolpyruvate + GTP + H(+) = enolpyruvoyl-2-diphospho-5'-guanosine + diphosphate. It participates in cofactor biosynthesis; coenzyme F420 biosynthesis. In terms of biological role, guanylyltransferase that catalyzes the activation of phosphoenolpyruvate (PEP) as enolpyruvoyl-2-diphospho-5'-guanosine, via the condensation of PEP with GTP. It is involved in the biosynthesis of coenzyme F420, a hydride carrier cofactor. This Conexibacter woesei (strain DSM 14684 / CCUG 47730 / CIP 108061 / JCM 11494 / NBRC 100937 / ID131577) protein is Phosphoenolpyruvate guanylyltransferase.